Here is a 230-residue protein sequence, read N- to C-terminus: Ion-translocating oxidoreductase complex subunit E (230 aa).

A run of 5 helical transmembrane segments spans residues 39–59 (LGLG…VSLI), 69–89 (IPVF…LMNA), 93–113 (GLYL…IIIG), 125–145 (LPAA…LVVL), and 182–202 (SFLL…LIAL).

The protein belongs to the NqrDE/RnfAE family. As to quaternary structure, the complex is composed of six subunits: RnfA, RnfB, RnfC, RnfD, RnfE and RnfG.

The protein localises to the cell inner membrane. Its function is as follows. Part of a membrane-bound complex that couples electron transfer with translocation of ions across the membrane. The polypeptide is Ion-translocating oxidoreductase complex subunit E (Vibrio vulnificus (strain YJ016)).